Reading from the N-terminus, the 549-residue chain is Hydroxylamine reductase (549 aa).

4 residues coordinate [4Fe-4S] cluster: C5, C8, C17, and C23. 8 residues coordinate hybrid [4Fe-2O-2S] cluster: H244, E268, C312, C403, C431, C456, E491, and K493. C403 is subject to Cysteine persulfide.

It belongs to the HCP family. The cofactor is [4Fe-4S] cluster. It depends on hybrid [4Fe-2O-2S] cluster as a cofactor.

It is found in the cytoplasm. The enzyme catalyses A + NH4(+) + H2O = hydroxylamine + AH2 + H(+). In terms of biological role, catalyzes the reduction of hydroxylamine to form NH(3) and H(2)O. The protein is Hydroxylamine reductase of Clostridium perfringens (strain 13 / Type A).